Reading from the N-terminus, the 76-residue chain is ATP synthase subunit 9, mitochondrial (76 aa).

The next 2 membrane-spanning stretches (helical) occupy residues 14-34 and 52-72; these read ISTIGLLGAGIGIAIVFAALI and ILGFALSEATGLFCLMISFLL.

Belongs to the ATPase C chain family. In terms of assembly, F-type ATPases have 2 components, CF(1) - the catalytic core - and CF(0) - the membrane proton channel. CF(1) has five subunits: alpha(3), beta(3), gamma(1), delta(1), epsilon(1). CF(0) has three main subunits: a, b and c.

The protein resides in the mitochondrion membrane. Functionally, mitochondrial membrane ATP synthase (F(1)F(0) ATP synthase or Complex V) produces ATP from ADP in the presence of a proton gradient across the membrane which is generated by electron transport complexes of the respiratory chain. F-type ATPases consist of two structural domains, F(1) - containing the extramembraneous catalytic core and F(0) - containing the membrane proton channel, linked together by a central stalk and a peripheral stalk. During catalysis, ATP synthesis in the catalytic domain of F(1) is coupled via a rotary mechanism of the central stalk subunits to proton translocation. Part of the complex F(0) domain. A homomeric c-ring of probably 10 subunits is part of the complex rotary element. The chain is ATP synthase subunit 9, mitochondrial (ATP9) from Vanderwaltozyma polyspora (strain ATCC 22028 / DSM 70294 / BCRC 21397 / CBS 2163 / NBRC 10782 / NRRL Y-8283 / UCD 57-17) (Kluyveromyces polysporus).